The chain runs to 624 residues: Diatom spindle kinesin-1 (624 aa).

The segment at 1 to 59 (MNAANRRKSTSTVGITGRKDATRMKIEQMEKERKERRKTMMQRKEARKQEHMKNIEAGN) is disordered. Positions 1–85 (MNAANRRKST…QENKIGDKSP (85 aa)) are globular. 2 stretches are compositionally biased toward basic and acidic residues: residues 17-33 (GRKDATRMKIEQMEKER) and 42-54 (QRKEARKQEHMKN). The Kinesin motor domain maps to 95 to 411 (NICIAVRKRP…LRYADRIKEQ (317 aa)). 186-193 (GQTGSGKT) provides a ligand contact to ATP. The stretch at 426-624 (SNREIMPSKE…LARQVQLTQY (199 aa)) forms a coiled coil. The span at 478–511 (VDEEEADDEEGDYEEESEDLDYEDSEGQDYEEAV) shows a compositional bias: acidic residues. The tract at residues 478-528 (VDEEEADDEEGDYEEESEDLDYEDSEGQDYEEAVESQYDHSQEAQEGEEEL) is disordered.

This sequence belongs to the TRAFAC class myosin-kinesin ATPase superfamily. Kinesin family. MCAK/KIF2 subfamily.

The protein localises to the cytoplasm. Its subcellular location is the cytoskeleton. Involved in anaphase spindle elongation. This chain is Diatom spindle kinesin-1 (DSK1), found in Cylindrotheca fusiformis (Marine diatom).